A 305-amino-acid polypeptide reads, in one-letter code: PI protein (305 aa).

It belongs to the initiator RepB protein family. In terms of assembly, homodimer.

Functionally, initiation for plasmid R6K DNA replication. This Escherichia coli protein is PI protein (pir).